The chain runs to 1380 residues: DNA-directed RNA polymerase subunit beta (1380 aa).

The protein belongs to the RNA polymerase beta chain family. In terms of assembly, the RNAP catalytic core consists of 2 alpha, 1 beta, 1 beta' and 1 omega subunit. When a sigma factor is associated with the core the holoenzyme is formed, which can initiate transcription.

It catalyses the reaction RNA(n) + a ribonucleoside 5'-triphosphate = RNA(n+1) + diphosphate. DNA-dependent RNA polymerase catalyzes the transcription of DNA into RNA using the four ribonucleoside triphosphates as substrates. In Ehrlichia canis (strain Jake), this protein is DNA-directed RNA polymerase subunit beta.